Here is a 145-residue protein sequence, read N- to C-terminus: Large ribosomal subunit protein uL11 (145 aa).

This sequence belongs to the universal ribosomal protein uL11 family. As to quaternary structure, part of the ribosomal stalk of the 50S ribosomal subunit. Interacts with L10 and the large rRNA to form the base of the stalk. L10 forms an elongated spine to which L12 dimers bind in a sequential fashion forming a multimeric L10(L12)X complex. Post-translationally, one or more lysine residues are methylated.

Functionally, forms part of the ribosomal stalk which helps the ribosome interact with GTP-bound translation factors. This is Large ribosomal subunit protein uL11 from Rickettsia felis (strain ATCC VR-1525 / URRWXCal2) (Rickettsia azadi).